Consider the following 256-residue polypeptide: Acetyl-coenzyme A carboxylase carboxyl transferase subunit alpha (256 aa).

A CoA carboxyltransferase C-terminal domain is found at 1–236; that stretch reads MTDVARILKE…RSHLIDEITQ (236 aa).

It belongs to the AccA family. In terms of assembly, acetyl-CoA carboxylase is a heterohexamer composed of biotin carboxyl carrier protein (AccB), biotin carboxylase (AccC) and two subunits each of ACCase subunit alpha (AccA) and ACCase subunit beta (AccD).

The protein resides in the cytoplasm. The enzyme catalyses N(6)-carboxybiotinyl-L-lysyl-[protein] + acetyl-CoA = N(6)-biotinyl-L-lysyl-[protein] + malonyl-CoA. It participates in lipid metabolism; malonyl-CoA biosynthesis; malonyl-CoA from acetyl-CoA: step 1/1. Functionally, component of the acetyl coenzyme A carboxylase (ACC) complex. First, biotin carboxylase catalyzes the carboxylation of biotin on its carrier protein (BCCP) and then the CO(2) group is transferred by the carboxyltransferase to acetyl-CoA to form malonyl-CoA. In Streptococcus equi subsp. zooepidemicus (strain MGCS10565), this protein is Acetyl-coenzyme A carboxylase carboxyl transferase subunit alpha.